The primary structure comprises 89 residues: Defensin-like protein 197 (89 aa).

Residues 1-26 (MKFVSVFLVLFIFFLVVLEAPEKIEA) form the signal peptide. 4 cysteine pairs are disulfide-bonded: C33-C86, C46-C70, C55-C81, and C59-C83.

Belongs to the DEFL family. Protease inhibitor I18 (RTI/MTI-2) subfamily.

It is found in the secreted. The chain is Defensin-like protein 197 (ATTI6) from Arabidopsis thaliana (Mouse-ear cress).